An 814-amino-acid chain; its full sequence is Acyl-coenzyme A dehydrogenase (814 aa).

The active-site Proton acceptor is glutamate 497.

This sequence belongs to the acyl-CoA dehydrogenase family. It depends on FAD as a cofactor.

The catalysed reaction is a medium-chain 2,3-saturated fatty acyl-CoA + oxidized [electron-transfer flavoprotein] + H(+) = a medium-chain (2E)-enoyl-CoA + reduced [electron-transfer flavoprotein]. It catalyses the reaction a long-chain 2,3-saturated fatty acyl-CoA + oxidized [electron-transfer flavoprotein] + H(+) = a long-chain (2E)-enoyl-CoA + reduced [electron-transfer flavoprotein]. It participates in lipid metabolism; fatty acid beta-oxidation. In terms of biological role, catalyzes the dehydrogenation of acyl-coenzymes A (acyl-CoAs) to 2-enoyl-CoAs, the first step of the beta-oxidation cycle of fatty acid degradation. Is required for the utilization of medium- and long-chain fatty acids as sole carbon sources for growth. Is needed for bacterial survival during carbone-source starvation. The sequence is that of Acyl-coenzyme A dehydrogenase (fadE) from Salmonella typhi.